The primary structure comprises 227 residues: Phosphoribosylformylglycinamidine synthase subunit PurQ (227 aa).

A Glutamine amidotransferase type-1 domain is found at 3-225 (FAVIVLPGSN…VKNWRDTHVT (223 aa)). Cys-86 acts as the Nucleophile in catalysis. Catalysis depends on residues His-194 and Glu-196.

Part of the FGAM synthase complex composed of 1 PurL, 1 PurQ and 2 PurS subunits.

It is found in the cytoplasm. The catalysed reaction is N(2)-formyl-N(1)-(5-phospho-beta-D-ribosyl)glycinamide + L-glutamine + ATP + H2O = 2-formamido-N(1)-(5-O-phospho-beta-D-ribosyl)acetamidine + L-glutamate + ADP + phosphate + H(+). The enzyme catalyses L-glutamine + H2O = L-glutamate + NH4(+). The protein operates within purine metabolism; IMP biosynthesis via de novo pathway; 5-amino-1-(5-phospho-D-ribosyl)imidazole from N(2)-formyl-N(1)-(5-phospho-D-ribosyl)glycinamide: step 1/2. Its function is as follows. Part of the phosphoribosylformylglycinamidine synthase complex involved in the purines biosynthetic pathway. Catalyzes the ATP-dependent conversion of formylglycinamide ribonucleotide (FGAR) and glutamine to yield formylglycinamidine ribonucleotide (FGAM) and glutamate. The FGAM synthase complex is composed of three subunits. PurQ produces an ammonia molecule by converting glutamine to glutamate. PurL transfers the ammonia molecule to FGAR to form FGAM in an ATP-dependent manner. PurS interacts with PurQ and PurL and is thought to assist in the transfer of the ammonia molecule from PurQ to PurL. This Bacillus pumilus (strain SAFR-032) protein is Phosphoribosylformylglycinamidine synthase subunit PurQ.